The following is a 410-amino-acid chain: Cysteine desulfurase IscS (410 aa).

Residues 80–81, asparagine 160, glutamine 188, and 208–210 contribute to the pyridoxal 5'-phosphate site; these read AT and SGH. Residue lysine 211 is modified to N6-(pyridoxal phosphate)lysine. Threonine 248 contributes to the pyridoxal 5'-phosphate binding site. Cysteine 334 functions as the Cysteine persulfide intermediate in the catalytic mechanism. Residue cysteine 334 participates in [2Fe-2S] cluster binding.

Belongs to the class-V pyridoxal-phosphate-dependent aminotransferase family. NifS/IscS subfamily. In terms of assembly, homodimer. Forms a heterotetramer with IscU, interacts with other sulfur acceptors. Requires pyridoxal 5'-phosphate as cofactor.

It is found in the cytoplasm. The enzyme catalyses (sulfur carrier)-H + L-cysteine = (sulfur carrier)-SH + L-alanine. The protein operates within cofactor biosynthesis; iron-sulfur cluster biosynthesis. Its function is as follows. Master enzyme that delivers sulfur to a number of partners involved in Fe-S cluster assembly, tRNA modification or cofactor biosynthesis. Catalyzes the removal of elemental sulfur atoms from cysteine to produce alanine. Functions as a sulfur delivery protein for Fe-S cluster synthesis onto IscU, an Fe-S scaffold assembly protein, as well as other S acceptor proteins. This is Cysteine desulfurase IscS from Rickettsia massiliae (strain Mtu5).